The following is a 500-amino-acid chain: Protein PIGMENT DEFECTIVE 338, chloroplastic (500 aa).

The transit peptide at 1 to 63 directs the protein to the chloroplast; sequence MQTLLCQPCK…FAFRGFSICR (63 aa). S1 motif domains are found at residues 156–265, 283–351, and 362–431; these read KPGD…LSSR, NEPI…LSEK, and GTLL…LSIA.

Belongs to the bacterial ribosomal protein bS1 family. In terms of assembly, interacts with CRP1 and PRFB3. In terms of tissue distribution, present in leaves (at protein level). Confined to leaf chlorenchyma cells.

It localises to the plastid. The protein localises to the chloroplast. RNA-binding protein that acts as an RNA chaperone to remodel RNA structure and activates their translation. Required for seed pigmentation. Necessary for chloroplast development and subsequent photosynthetic electron flow, as well as for non-photochemical quenching (NPQ). Rubisco regulatory factor which regulates the concerted biogenesis of NDH, PSI (including PsaA, PsaB, PsaD, PsaF, PsaL, PsaG, PsaK and NdhH) and Cytb(6)f (including PetA, PetB, PetC and PetD) complexes. Binds specifically to and involved in the post-transcriptional regulation of plastid-encoded mRNAs (e.g. rbcL, petA, petB, petD and Ycf1), thus modulating expression, cellular localization/compartmentalization, and photosynthetic function. The protein is Protein PIGMENT DEFECTIVE 338, chloroplastic of Arabidopsis thaliana (Mouse-ear cress).